The sequence spans 1398 residues: DNA-directed RNA polymerase subunit beta' (1398 aa).

Zn(2+) is bound by residues Cys-71, Cys-73, Cys-86, and Cys-89. The Mg(2+) site is built by Asp-462, Asp-464, and Asp-466. Zn(2+) contacts are provided by Cys-810, Cys-883, Cys-890, and Cys-893. Positions 1377-1398 (EKQAAVVSPAPEAELPALPPAE) are disordered. Residues 1380-1392 (AAVVSPAPEAELP) show a composition bias toward low complexity.

The protein belongs to the RNA polymerase beta' chain family. The RNAP catalytic core consists of 2 alpha, 1 beta, 1 beta' and 1 omega subunit. When a sigma factor is associated with the core the holoenzyme is formed, which can initiate transcription. Mg(2+) is required as a cofactor. Requires Zn(2+) as cofactor.

It catalyses the reaction RNA(n) + a ribonucleoside 5'-triphosphate = RNA(n+1) + diphosphate. In terms of biological role, DNA-dependent RNA polymerase catalyzes the transcription of DNA into RNA using the four ribonucleoside triphosphates as substrates. The chain is DNA-directed RNA polymerase subunit beta' from Bradyrhizobium diazoefficiens (strain JCM 10833 / BCRC 13528 / IAM 13628 / NBRC 14792 / USDA 110).